A 382-amino-acid chain; its full sequence is Na(+)/H(+) antiporter NhaA (382 aa).

Helical transmembrane passes span 14–34, 49–69, 87–107, 117–137, 146–166, 171–191, 205–225, 252–272, 285–305, 321–341, and 356–376; these read AGGI…NSSL, MSVS…LIGL, IFPA…YVAF, GWAI…ALLG, VFLL…IAFF, LSVL…LLNA, FILW…GVVL, VAFA…LEGV, VALG…YLAV, IFAV…ISSL, and LGIL…LSIS.

It belongs to the NhaA Na(+)/H(+) (TC 2.A.33) antiporter family.

It localises to the cell inner membrane. It catalyses the reaction Na(+)(in) + 2 H(+)(out) = Na(+)(out) + 2 H(+)(in). Its function is as follows. Na(+)/H(+) antiporter that extrudes sodium in exchange for external protons. This chain is Na(+)/H(+) antiporter NhaA, found in Aliivibrio fischeri (strain ATCC 700601 / ES114) (Vibrio fischeri).